A 156-amino-acid chain; its full sequence is Snaclec jerdonibitin subunit alpha (156 aa).

The N-terminal stretch at 1–23 (MGRFIFVSFGLLVVFLSLSGTGA) is a signal peptide. Disulfide bonds link Cys25-Cys36, Cys53-Cys150, and Cys125-Cys142. Residues 32–151 (FRQYCYRVFK…CGQQHLFMCK (120 aa)) enclose the C-type lectin domain.

This sequence belongs to the snaclec family. In terms of assembly, heterodimer of subunits alpha and beta; disulfide-linked. As to expression, expressed by the venom gland.

The protein localises to the secreted. Its function is as follows. Snaclec that dose-dependently inhibits platelet aggregation induced by ristocetin or low-dose thrombin, but not by high-dose thrombin. Binds to GPIbalpha (GP1BA). In vivo, also dose-dependently induces thrombocytopenia of mice and platelet counts remains at very low level even after 18 hours intravenous injection. The sequence is that of Snaclec jerdonibitin subunit alpha from Protobothrops jerdonii (Jerdon's pitviper).